Reading from the N-terminus, the 285-residue chain is Shikimate dehydrogenase (NADP(+)) (285 aa).

Shikimate contacts are provided by residues 20–22 and threonine 67; that span reads SLS. The active-site Proton acceptor is lysine 71. Glutamate 83 provides a ligand contact to NADP(+). Shikimate is bound by residues asparagine 92 and aspartate 107. NADP(+) is bound by residues 132-136 and leucine 230; that span reads GAGGA. Tyrosine 232 is a shikimate binding site. Position 253 (glycine 253) interacts with NADP(+).

The protein belongs to the shikimate dehydrogenase family. As to quaternary structure, homodimer.

The catalysed reaction is shikimate + NADP(+) = 3-dehydroshikimate + NADPH + H(+). The protein operates within metabolic intermediate biosynthesis; chorismate biosynthesis; chorismate from D-erythrose 4-phosphate and phosphoenolpyruvate: step 4/7. Functionally, involved in the biosynthesis of the chorismate, which leads to the biosynthesis of aromatic amino acids. Catalyzes the reversible NADPH linked reduction of 3-dehydroshikimate (DHSA) to yield shikimate (SA). In Salinibacter ruber (strain DSM 13855 / M31), this protein is Shikimate dehydrogenase (NADP(+)).